We begin with the raw amino-acid sequence, 299 residues long: ATP phosphoribosyltransferase (299 aa).

The protein belongs to the ATP phosphoribosyltransferase family. Long subfamily. As to quaternary structure, equilibrium between an active dimeric form, an inactive hexameric form and higher aggregates. Interconversion between the various forms is largely reversible and is influenced by the natural substrates and inhibitors of the enzyme. Mg(2+) serves as cofactor.

It localises to the cytoplasm. It carries out the reaction 1-(5-phospho-beta-D-ribosyl)-ATP + diphosphate = 5-phospho-alpha-D-ribose 1-diphosphate + ATP. Its pathway is amino-acid biosynthesis; L-histidine biosynthesis; L-histidine from 5-phospho-alpha-D-ribose 1-diphosphate: step 1/9. Feedback inhibited by histidine. Its function is as follows. Catalyzes the condensation of ATP and 5-phosphoribose 1-diphosphate to form N'-(5'-phosphoribosyl)-ATP (PR-ATP). Has a crucial role in the pathway because the rate of histidine biosynthesis seems to be controlled primarily by regulation of HisG enzymatic activity. The chain is ATP phosphoribosyltransferase from Buchnera aphidicola subsp. Schlechtendalia chinensis.